The following is a 208-amino-acid chain: Protein-L-isoaspartate O-methyltransferase (208 aa).

Residue serine 59 is part of the active site.

Belongs to the methyltransferase superfamily. L-isoaspartyl/D-aspartyl protein methyltransferase family.

It is found in the cytoplasm. The catalysed reaction is [protein]-L-isoaspartate + S-adenosyl-L-methionine = [protein]-L-isoaspartate alpha-methyl ester + S-adenosyl-L-homocysteine. Its function is as follows. Catalyzes the methyl esterification of L-isoaspartyl residues in peptides and proteins that result from spontaneous decomposition of normal L-aspartyl and L-asparaginyl residues. It plays a role in the repair and/or degradation of damaged proteins. The protein is Protein-L-isoaspartate O-methyltransferase of Vibrio parahaemolyticus serotype O3:K6 (strain RIMD 2210633).